The sequence spans 359 residues: Histamine H2 receptor (359 aa).

Over 1-22 (MAPNGTASSFCLDSTACKITIT) the chain is Extracellular. The N-linked (GlcNAc...) asparagine glycan is linked to N4. A helical transmembrane segment spans residues 23-44 (VVLAVLILITVAGNVVVCLAVG). The Cytoplasmic segment spans residues 45–57 (LNRRLRNLTNCFI). The helical transmembrane segment at 58–81 (VSLAITDLLLGLLVLPFSAIYQLS) threads the bilayer. Residues 82–92 (CKWSFGKVFCN) lie on the Extracellular side of the membrane. C91 and C174 are disulfide-bonded. A helical transmembrane segment spans residues 93–114 (IYTSLDVMLCTASILNLFMISL). Over 115–134 (DRYCAVMDPLRYPVLVTPVR) the chain is Cytoplasmic. A helical membrane pass occupies residues 135–159 (VAISLVLIWVISITLSFLSIHLGWN). The Extracellular portion of the chain corresponds to 160-180 (SRNETSKGNHTTSKCKVQVNE). The helical transmembrane segment at 181–204 (VYGLVDGLVTFYLPLLIMCITYYR) threads the bilayer. The Cytoplasmic segment spans residues 205 to 234 (IFKVARDQAKRINHISSWKAATIREHKATV). A helical membrane pass occupies residues 235–258 (TLAAVMGAFIICWFPYFTAFVYRG). Over 259–267 (LRGDDAINE) the chain is Extracellular. The helical transmembrane segment at 268–289 (VLEAIVLWLGYANSALNPILYA) threads the bilayer. At 290-359 (ALNRDFRTGY…VTAPQGATDR (70 aa)) the chain is on the cytoplasmic side. A lipid anchor (S-palmitoyl cysteine) is attached at C305. The tract at residues 316–340 (SLRSNASQLSRTQSREPRQQEEKPL) is disordered. Polar residues predominate over residues 317–327 (LRSNASQLSRT). Over residues 328 to 340 (QSREPRQQEEKPL) the composition is skewed to basic and acidic residues.

The protein belongs to the G-protein coupled receptor 1 family.

Its subcellular location is the cell membrane. In terms of biological role, the H2 subclass of histamine receptors mediates gastric acid secretion. Also appears to regulate gastrointestinal motility and intestinal secretion. Possible role in regulating cell growth and differentiation. The activity of this receptor is mediated by G proteins which activate adenylyl cyclase and, through a separate G protein-dependent mechanism, the phosphoinositide/protein kinase (PKC) signaling pathway. The polypeptide is Histamine H2 receptor (HRH2) (Gorilla gorilla gorilla (Western lowland gorilla)).